Consider the following 305-residue polypeptide: Achromobactin-binding periplasmic protein (305 aa).

Residues methionine 1–alanine 29 form the signal peptide. Positions arginine 37 to glycine 302 constitute a Fe/B12 periplasmic-binding domain.

The protein belongs to the bacterial solute-binding protein 8 family.

It is found in the periplasm. Functionally, binds citrate- or chloride-dependent Fe(3+); part of the binding-protein-dependent transport system CbrABCD for uptake of the siderophore achromobactin. This is Achromobactin-binding periplasmic protein (cbrA) from Dickeya dadantii (strain 3937) (Erwinia chrysanthemi (strain 3937)).